We begin with the raw amino-acid sequence, 325 residues long: Serpentine receptor class delta-59 (325 aa).

8 helical membrane-spanning segments follow: residues 14-34 (WYWP…LHLI), 45-65 (LKIF…FAFL), 75-95 (ISAA…TCFI), 97-117 (YHVF…TVLF), 132-152 (TYIM…IPFT), 190-210 (FLSA…GCLI), 235-255 (TLIH…IPSF), and 275-295 (ILVS…YFIV).

The protein belongs to the nematode receptor-like protein srd family.

The protein resides in the membrane. In Caenorhabditis elegans, this protein is Serpentine receptor class delta-59 (srd-59).